Consider the following 510-residue polypeptide: NAD(P)H-quinone oxidoreductase subunit 2 B, chloroplastic (510 aa).

Transmembrane regions (helical) follow at residues 24-44 (LLLF…GLIL), 57-77 (IPWL…ALLF), 99-119 (IFQF…VEYI), 124-144 (MAIT…MFLC), 150-170 (ITIF…SGYT), 183-203 (YLLM…WLYG), 229-249 (ISIA…PAPF), 295-315 (WHLL…LIAI), 323-343 (MLAY…IVGD), 354-374 (YMLF…LFGL), 395-415 (ALSS…AGFF), 418-438 (LHLF…IGLL), and 484-504 (MIVC…IIAI).

Belongs to the complex I subunit 2 family. In terms of assembly, NDH is composed of at least 16 different subunits, 5 of which are encoded in the nucleus.

The protein resides in the plastid. It localises to the chloroplast thylakoid membrane. It catalyses the reaction a plastoquinone + NADH + (n+1) H(+)(in) = a plastoquinol + NAD(+) + n H(+)(out). The catalysed reaction is a plastoquinone + NADPH + (n+1) H(+)(in) = a plastoquinol + NADP(+) + n H(+)(out). In terms of biological role, NDH shuttles electrons from NAD(P)H:plastoquinone, via FMN and iron-sulfur (Fe-S) centers, to quinones in the photosynthetic chain and possibly in a chloroplast respiratory chain. The immediate electron acceptor for the enzyme in this species is believed to be plastoquinone. Couples the redox reaction to proton translocation, and thus conserves the redox energy in a proton gradient. The chain is NAD(P)H-quinone oxidoreductase subunit 2 B, chloroplastic from Drimys granadensis.